Here is a 1020-residue protein sequence, read N- to C-terminus: Protein CLASP-2 (1020 aa).

Residues A259–S271 are compositionally biased toward low complexity. Disordered regions lie at residues A259–S280, P329–A387, and L419–T461. A compositionally biased stretch (polar residues) spans P329–G343. Low complexity predominate over residues S372–P381. The segment covering Q450 to D460 has biased composition (polar residues). One copy of the HEAT repeat lies at L954–H992.

This sequence belongs to the CLASP family. As to quaternary structure, interacts with hcp-1 and hcp-2.

Its subcellular location is the cytoplasm. The protein resides in the cytoskeleton. It is found in the microtubule organizing center. The protein localises to the centrosome. It localises to the chromosome. Its subcellular location is the centromere. The protein resides in the kinetochore. It is found in the spindle. In terms of biological role, probable microtubule plus-end tracking protein that promotes the stabilization of dynamic microtubules. Required for the formation of mitotic and meiotic spindles. Specifically promotes the polymerization of kinetochore-bound microtubules. Also required for cytoplasmic streaming. Essential for embryonic development. The sequence is that of Protein CLASP-2 (cls-2) from Caenorhabditis elegans.